A 422-amino-acid polypeptide reads, in one-letter code: Calpain-2 catalytic subunit (422 aa).

Residues 1 to 66 enclose the Calpain catalytic domain; that stretch reads QKLIRIRNPW…YSRLEICNLT (66 aa). Asn-8 is an active-site residue. Ca(2+)-binding residues include Glu-14, Asp-21, and Glu-45. The segment at 67–236 is domain III; sequence PDTLTSDTYK…KKADYQAVDD (170 aa). The linker stretch occupies residues 237–251; sequence EIEADLEEADVSEDD. Residues 252 to 422 are domain IV; the sequence is IDDGFRRLFA…LISWLCFSVL (171 aa). The Ca(2+) site is built by Ala-264, Asp-267, Glu-269, Glu-274, Asp-307, Asp-309, Thr-311, Lys-313, Glu-318, Asp-337, Asp-339, Ser-341, Thr-343, Glu-348, Asp-380, and Asn-383. EF-hand domains are found at residues 294-327 and 324-359; these read LSIE…TKIQ and TKIQ…AGFK. Residues 389-422 form the EF-hand 3 domain; that stretch reads VRLETLFKIFKQLDPDNTGMIQLDLISWLCFSVL.

It belongs to the peptidase C2 family. Forms a heterodimer with a small (regulatory) subunit (CAPNS1). Interacts with CPEB3; this leads to cleavage of CPEB3. It depends on Ca(2+) as a cofactor. Ubiquitous.

The protein resides in the cytoplasm. It is found in the cell membrane. The catalysed reaction is Broad endopeptidase specificity.. With respect to regulation, activated by 200-1000 micromolar concentrations of calcium and inhibited by calpastatin. Functionally, calcium-regulated non-lysosomal thiol-protease which catalyzes limited proteolysis of substrates involved in cytoskeletal remodeling and signal transduction. Proteolytically cleaves MYOC at 'Arg-226'. Proteolytically cleaves CPEB3 following neuronal stimulation which abolishes CPEB3 translational repressor activity, leading to translation of CPEB3 target mRNAs. The chain is Calpain-2 catalytic subunit (CAPN2) from Oryctolagus cuniculus (Rabbit).